Consider the following 440-residue polypeptide: Glucose-1-phosphate adenylyltransferase (440 aa).

Alpha-D-glucose 1-phosphate is bound by residues Tyr125, Gly190, 205–206 (EK), and Ser223.

This sequence belongs to the bacterial/plant glucose-1-phosphate adenylyltransferase family. Homotetramer.

The catalysed reaction is alpha-D-glucose 1-phosphate + ATP + H(+) = ADP-alpha-D-glucose + diphosphate. It functions in the pathway glycan biosynthesis; glycogen biosynthesis. Involved in the biosynthesis of ADP-glucose, a building block required for the elongation reactions to produce glycogen. Catalyzes the reaction between ATP and alpha-D-glucose 1-phosphate (G1P) to produce pyrophosphate and ADP-Glc. The sequence is that of Glucose-1-phosphate adenylyltransferase from Dechloromonas aromatica (strain RCB).